Consider the following 426-residue polypeptide: Serine--tRNA ligase (426 aa).

233 to 235 contacts L-serine; sequence TAE. ATP is bound at residue 264–266; it reads RSE. Glu287 serves as a coordination point for L-serine. Position 351–354 (351–354) interacts with ATP; the sequence is EISS. An L-serine-binding site is contributed by Ser387.

The protein belongs to the class-II aminoacyl-tRNA synthetase family. Type-1 seryl-tRNA synthetase subfamily. In terms of assembly, homodimer. The tRNA molecule binds across the dimer.

Its subcellular location is the cytoplasm. The enzyme catalyses tRNA(Ser) + L-serine + ATP = L-seryl-tRNA(Ser) + AMP + diphosphate + H(+). The catalysed reaction is tRNA(Sec) + L-serine + ATP = L-seryl-tRNA(Sec) + AMP + diphosphate + H(+). The protein operates within aminoacyl-tRNA biosynthesis; selenocysteinyl-tRNA(Sec) biosynthesis; L-seryl-tRNA(Sec) from L-serine and tRNA(Sec): step 1/1. Catalyzes the attachment of serine to tRNA(Ser). Is also able to aminoacylate tRNA(Sec) with serine, to form the misacylated tRNA L-seryl-tRNA(Sec), which will be further converted into selenocysteinyl-tRNA(Sec). This Francisella philomiragia subsp. philomiragia (strain ATCC 25017 / CCUG 19701 / FSC 153 / O#319-036) protein is Serine--tRNA ligase.